The chain runs to 222 residues: 7-cyano-7-deazaguanine synthase (222 aa).

Position 14–24 (14–24 (FSGGQDSTTCL)) interacts with ATP. Positions 192, 201, 204, and 207 each coordinate Zn(2+).

This sequence belongs to the QueC family. Homodimer. Zn(2+) serves as cofactor.

It catalyses the reaction 7-carboxy-7-deazaguanine + NH4(+) + ATP = 7-cyano-7-deazaguanine + ADP + phosphate + H2O + H(+). It functions in the pathway purine metabolism; 7-cyano-7-deazaguanine biosynthesis. In terms of biological role, catalyzes the ATP-dependent conversion of 7-carboxy-7-deazaguanine (CDG) to 7-cyano-7-deazaguanine (preQ(0)). This Clostridium acetobutylicum (strain ATCC 824 / DSM 792 / JCM 1419 / IAM 19013 / LMG 5710 / NBRC 13948 / NRRL B-527 / VKM B-1787 / 2291 / W) protein is 7-cyano-7-deazaguanine synthase.